A 496-amino-acid polypeptide reads, in one-letter code: Glycerol kinase (496 aa).

Thr12 provides a ligand contact to ADP. ATP contacts are provided by Thr12, Thr13, and Ser14. Residue Thr12 coordinates sn-glycerol 3-phosphate. Residue Arg16 participates in ADP binding. Residues Arg82, Glu83, Tyr134, and Asp244 each coordinate sn-glycerol 3-phosphate. Glycerol contacts are provided by Arg82, Glu83, Tyr134, Asp244, and Gln245. The ADP site is built by Thr266 and Gly309. The ATP site is built by Thr266, Gly309, Gln313, and Gly410. ADP contacts are provided by Gly410 and Asn414.

The protein belongs to the FGGY kinase family.

It catalyses the reaction glycerol + ATP = sn-glycerol 3-phosphate + ADP + H(+). It functions in the pathway polyol metabolism; glycerol degradation via glycerol kinase pathway; sn-glycerol 3-phosphate from glycerol: step 1/1. Its activity is regulated as follows. Inhibited by fructose 1,6-bisphosphate (FBP). In terms of biological role, key enzyme in the regulation of glycerol uptake and metabolism. Catalyzes the phosphorylation of glycerol to yield sn-glycerol 3-phosphate. This Treponema denticola (strain ATCC 35405 / DSM 14222 / CIP 103919 / JCM 8153 / KCTC 15104) protein is Glycerol kinase.